The following is a 113-amino-acid chain: ATP-dependent Clp protease adapter protein ClpS (113 aa).

It belongs to the ClpS family. Binds to the N-terminal domain of the chaperone ClpA.

Its function is as follows. Involved in the modulation of the specificity of the ClpAP-mediated ATP-dependent protein degradation. The polypeptide is ATP-dependent Clp protease adapter protein ClpS (Leptospira biflexa serovar Patoc (strain Patoc 1 / Ames)).